The chain runs to 114 residues: Translation initiation factor 1A (114 aa).

In terms of domain architecture, S1-like spans 19–91; it reads SEFRLPGEGE…EKGDIVHKYE (73 aa).

Belongs to the eIF-1A family.

Seems to be required for maximal rate of protein biosynthesis. Enhances ribosome dissociation into subunits and stabilizes the binding of the initiator Met-tRNA(I) to 40 S ribosomal subunits. This chain is Translation initiation factor 1A (eIF1A), found in Pyrobaculum aerophilum (strain ATCC 51768 / DSM 7523 / JCM 9630 / CIP 104966 / NBRC 100827 / IM2).